We begin with the raw amino-acid sequence, 174 residues long: uncharacterized protein (174 aa).

A disordered region spans residues 1–55 (MGCVVSKSDDIKNENESRQRNQASSSQQPSSSQTPSKQIGIAAKDSEEQPQEVSY). Residue Gly2 is the site of N-myristoyl glycine attachment. Over residues 7-19 (KSDDIKNENESRQ) the composition is skewed to basic and acidic residues. Over residues 20 to 38 (RNQASSSQQPSSSQTPSKQ) the composition is skewed to low complexity.

This is an uncharacterized protein from Dictyostelium discoideum (Social amoeba).